Reading from the N-terminus, the 686-residue chain is Protein SDA1 homolog (686 aa).

Phosphoserine occurs at positions 232, 234, and 236. The stretch at 254–315 (KKGSKNKKKL…SCKERFEVKM (62 aa)) forms a coiled coil. The tract at residues 484–508 (LEKEENTENDEDGWESASLSEEEED) is disordered. The segment covering 490-508 (TENDEDGWESASLSEEEED) has biased composition (acidic residues). T551 is modified (phosphothreonine). The disordered stretch occupies residues 563-586 (MKKEMDAAPGKAQKRKYLDMDSDE). 3 positions are modified to phosphoserine: S584, S588, and S594. Positions 604-649 (KPKSDKETRLATAMAGRTDRKEFVRKKTKINPFSSSTNKEKKKQKN) are disordered.

This sequence belongs to the SDA1 family.

Its subcellular location is the nucleus. The protein resides in the nucleolus. In terms of biological role, required for 60S pre-ribosomal subunits export to the cytoplasm. In Rattus norvegicus (Rat), this protein is Protein SDA1 homolog (Sdad1).